We begin with the raw amino-acid sequence, 126 residues long: Adult-specific rigid cuticular protein 12.4 (126 aa).

Residues 9-87 form the Chitin-binding type R&amp;R domain; that stretch reads GGAYNFGFNT…AMAALAPKAP (79 aa).

In terms of biological role, component of the rigid cuticle of the spider. This Araneus diadematus (European garden spider) protein is Adult-specific rigid cuticular protein 12.4.